The chain runs to 202 residues: LexA repressor (202 aa).

The H-T-H motif DNA-binding region spans Arg-28 to Lys-48. Residues Ser-119 and Lys-156 each act as for autocatalytic cleavage activity in the active site.

It belongs to the peptidase S24 family. As to quaternary structure, homodimer.

The enzyme catalyses Hydrolysis of Ala-|-Gly bond in repressor LexA.. In terms of biological role, represses a number of genes involved in the response to DNA damage (SOS response), including recA and lexA. Binds to the 16 bp palindromic sequence 5'-CTGTATATATATACAG-3'. In the presence of single-stranded DNA, RecA interacts with LexA causing an autocatalytic cleavage which disrupts the DNA-binding part of LexA, leading to derepression of the SOS regulon and eventually DNA repair. The protein is LexA repressor of Edwardsiella ictaluri (strain 93-146).